Reading from the N-terminus, the 106-residue chain is Pyrimidine/purine nucleoside phosphorylase (106 aa).

The protein belongs to the nucleoside phosphorylase PpnP family.

It carries out the reaction a purine D-ribonucleoside + phosphate = a purine nucleobase + alpha-D-ribose 1-phosphate. The catalysed reaction is adenosine + phosphate = alpha-D-ribose 1-phosphate + adenine. The enzyme catalyses cytidine + phosphate = cytosine + alpha-D-ribose 1-phosphate. It catalyses the reaction guanosine + phosphate = alpha-D-ribose 1-phosphate + guanine. It carries out the reaction inosine + phosphate = alpha-D-ribose 1-phosphate + hypoxanthine. The catalysed reaction is thymidine + phosphate = 2-deoxy-alpha-D-ribose 1-phosphate + thymine. The enzyme catalyses uridine + phosphate = alpha-D-ribose 1-phosphate + uracil. It catalyses the reaction xanthosine + phosphate = alpha-D-ribose 1-phosphate + xanthine. Catalyzes the phosphorolysis of diverse nucleosides, yielding D-ribose 1-phosphate and the respective free bases. Can use uridine, adenosine, guanosine, cytidine, thymidine, inosine and xanthosine as substrates. Also catalyzes the reverse reactions. This chain is Pyrimidine/purine nucleoside phosphorylase, found in Burkholderia vietnamiensis (strain G4 / LMG 22486) (Burkholderia cepacia (strain R1808)).